Here is a 207-residue protein sequence, read N- to C-terminus: Large ribosomal subunit protein uL4 (207 aa).

Residues 44–78 (LRQGTHKTKTRSEVRGGGRKPWRQKGTGRARQGSI) form a disordered region. Residues 60-71 (GGRKPWRQKGTG) show a composition bias toward basic residues.

Belongs to the universal ribosomal protein uL4 family. As to quaternary structure, part of the 50S ribosomal subunit.

Its function is as follows. One of the primary rRNA binding proteins, this protein initially binds near the 5'-end of the 23S rRNA. It is important during the early stages of 50S assembly. It makes multiple contacts with different domains of the 23S rRNA in the assembled 50S subunit and ribosome. In terms of biological role, forms part of the polypeptide exit tunnel. This chain is Large ribosomal subunit protein uL4, found in Halalkalibacterium halodurans (strain ATCC BAA-125 / DSM 18197 / FERM 7344 / JCM 9153 / C-125) (Bacillus halodurans).